A 350-amino-acid polypeptide reads, in one-letter code: Secreted effector protein PipB2 (350 aa).

Pentapeptide repeat domains follow at residues 162-201 (ANLTAENLCDADLSGANLEGAVLFMADCEGANFKGANLSG), 202-241 (TSLGDSNFKNACLEDSIMCGATLDHANLTGANLQHASLLG), 247-286 (CNCSGANMDHTNLSGATLIRADMSGATLQGATIMAAIMED), and 287-326 (AVLTRANLRKASFISTNLDGADLAEANLNNTCFKDCTLTH).

Interacts with the host kinesin light chain (KLC), a subunit of the kinesin-1 motor complex.

The protein localises to the secreted. Its subcellular location is the host membrane. Effector proteins function to alter host cell physiology and promote bacterial survival in host tissues. Involved in the reorganization of late endosome/lysosome (LE/Lys) compartments in mammalian cells. Necessary and sufficient to link kinesin-1 onto the Salmonella-containing vacuole (SCV) membrane. Required for centrifugal extension of lysosomal glycoprotein-rich membrane tubules, known as Salmonella-induced filaments (Sifs), away from the SCV and toward the cell periphery. Required for virulence, but not for intracellular survival and replication in phagocytic cells. This is Secreted effector protein PipB2 (pipB2) from Salmonella choleraesuis (strain SC-B67).